A 427-amino-acid polypeptide reads, in one-letter code: Trigger factor (427 aa).

A PPIase FKBP-type domain is found at 163-248; sequence GDTVVIDFVG…IHEVKTKEVP (86 aa).

The protein belongs to the FKBP-type PPIase family. Tig subfamily.

The protein localises to the cytoplasm. It carries out the reaction [protein]-peptidylproline (omega=180) = [protein]-peptidylproline (omega=0). Involved in protein export. Acts as a chaperone by maintaining the newly synthesized protein in an open conformation. Functions as a peptidyl-prolyl cis-trans isomerase. In Streptococcus agalactiae serotype III (strain NEM316), this protein is Trigger factor.